Consider the following 882-residue polypeptide: Alanine--tRNA ligase (882 aa).

Zn(2+) is bound by residues His563, His567, Cys665, and His669.

The protein belongs to the class-II aminoacyl-tRNA synthetase family. Zn(2+) serves as cofactor.

The protein localises to the cytoplasm. It carries out the reaction tRNA(Ala) + L-alanine + ATP = L-alanyl-tRNA(Ala) + AMP + diphosphate. Catalyzes the attachment of alanine to tRNA(Ala) in a two-step reaction: alanine is first activated by ATP to form Ala-AMP and then transferred to the acceptor end of tRNA(Ala). Also edits incorrectly charged Ser-tRNA(Ala) and Gly-tRNA(Ala) via its editing domain. In Synechococcus sp. (strain RCC307), this protein is Alanine--tRNA ligase.